Reading from the N-terminus, the 225-residue chain is Pyridoxine/pyridoxamine 5'-phosphate oxidase (225 aa).

Residues 9 to 12 and lysine 78 each bind substrate; that span reads RVDY. Residues 73 to 78, 88 to 89, lysine 95, and glutamine 117 each bind FMN; these read RTVLCK and YT. Residues tyrosine 135, arginine 139, and serine 143 each contribute to the substrate site. FMN contacts are provided by residues 152-153 and tryptophan 198; that span reads QS. 204-206 provides a ligand contact to substrate; it reads RLH. Position 208 (arginine 208) interacts with FMN.

Belongs to the pyridoxamine 5'-phosphate oxidase family. Homodimer. FMN serves as cofactor.

It catalyses the reaction pyridoxamine 5'-phosphate + O2 + H2O = pyridoxal 5'-phosphate + H2O2 + NH4(+). The enzyme catalyses pyridoxine 5'-phosphate + O2 = pyridoxal 5'-phosphate + H2O2. The protein operates within cofactor metabolism; pyridoxal 5'-phosphate salvage; pyridoxal 5'-phosphate from pyridoxamine 5'-phosphate: step 1/1. Its pathway is cofactor metabolism; pyridoxal 5'-phosphate salvage; pyridoxal 5'-phosphate from pyridoxine 5'-phosphate: step 1/1. Its function is as follows. Catalyzes the oxidation of either pyridoxine 5'-phosphate (PNP) or pyridoxamine 5'-phosphate (PMP) into pyridoxal 5'-phosphate (PLP). The protein is Pyridoxine/pyridoxamine 5'-phosphate oxidase of Nocardia farcinica (strain IFM 10152).